Reading from the N-terminus, the 416-residue chain is Chromate transport protein (416 aa).

Positions 1-21 are disordered; it reads MSVANEESYRPSKATDATTEA. 11 helical membrane passes run 99–119, 128–148, 160–177, 181–198, 204–224, 237–257, 283–303, 308–328, 341–361, 371–391, and 395–415; these read LGGV…MFAL, FVGT…IALI, LLDR…LAAI, DFWI…LLVL, ALLV…WAAP, ASVL…FGGA, LALS…VGYV, IGAV…SLIF, LHAF…ATTI, VPSL…LYAW, and LNVV…FPNQ.

The protein belongs to the chromate ion transporter (CHR) (TC 2.A.51) family.

Its subcellular location is the cell inner membrane. In terms of biological role, this protein reduces chromate accumulation and is essential for chromate resistance. The protein is Chromate transport protein of Pseudomonas aeruginosa.